The primary structure comprises 212 residues: Guanylate kinase (212 aa).

Positions 5–187 (GILCIISAPS…ALMHLQSIML (183 aa)) constitute a Guanylate kinase-like domain. 12–19 (APSGTGKS) is a binding site for ATP.

This sequence belongs to the guanylate kinase family.

The protein localises to the cytoplasm. It catalyses the reaction GMP + ATP = GDP + ADP. Functionally, essential for recycling GMP and indirectly, cGMP. This Blochmanniella pennsylvanica (strain BPEN) protein is Guanylate kinase.